Here is a 337-residue protein sequence, read N- to C-terminus: tRNA N6-adenosine threonylcarbamoyltransferase (337 aa).

Fe cation-binding residues include His111 and His115. Substrate-binding positions include 134-138, Asp167, Gly180, and Asn272; that span reads LVSGG. A Fe cation-binding site is contributed by Asp300.

Belongs to the KAE1 / TsaD family. Requires Fe(2+) as cofactor.

The protein resides in the cytoplasm. It carries out the reaction L-threonylcarbamoyladenylate + adenosine(37) in tRNA = N(6)-L-threonylcarbamoyladenosine(37) in tRNA + AMP + H(+). Its function is as follows. Required for the formation of a threonylcarbamoyl group on adenosine at position 37 (t(6)A37) in tRNAs that read codons beginning with adenine. Is involved in the transfer of the threonylcarbamoyl moiety of threonylcarbamoyl-AMP (TC-AMP) to the N6 group of A37, together with TsaE and TsaB. TsaD likely plays a direct catalytic role in this reaction. The chain is tRNA N6-adenosine threonylcarbamoyltransferase from Klebsiella pneumoniae (strain 342).